The following is a 150-amino-acid chain: Ribosome maturation factor RimP (150 aa).

This sequence belongs to the RimP family.

The protein resides in the cytoplasm. Required for maturation of 30S ribosomal subunits. The polypeptide is Ribosome maturation factor RimP (Klebsiella pneumoniae (strain 342)).